Here is an 850-residue protein sequence, read N- to C-terminus: Rho guanine nucleotide exchange factor 33 (850 aa).

2 stretches are compositionally biased toward basic and acidic residues: residues 1–13 (MEKSKAKQGENEH) and 98–113 (EEMQQKIEQLQQEKRR). 2 disordered regions span residues 1–21 (MEKSKAKQGENEHMPVNNPST) and 98–209 (EEMQ…DENL). A coiled-coil region spans residues 54–128 (LEEKVKSCRC…KAKKAQKEEH (75 aa)). Positions 130 to 149 (AQAGPASAPAPGSAPTQGSP) are enriched in low complexity. Residues 164 to 175 (DFTNMLPSQNYE) show a composition bias toward polar residues. The region spanning 273–448 (KRQTVALELL…RVFISHYTLL (176 aa)) is the DH domain. 2 disordered regions span residues 504–550 (EMLQ…WELE) and 702–850 (AAQA…WGWW). Low complexity-rich tracts occupy residues 510-520 (PSSSSSAPAVS) and 754-770 (APHGPAAAAAASRGAPR). Arg-766 carries the post-translational modification Omega-N-methylarginine. Over residues 773–783 (FPQQRSQSEKQ) the composition is skewed to polar residues. Residues 784–806 (TYLEEMHLEDATRFCPKEERESE) show a composition bias toward basic and acidic residues. Residues 826–835 (SFRKLFKKKN) are compositionally biased toward basic residues.

The polypeptide is Rho guanine nucleotide exchange factor 33 (Arhgef33) (Mus musculus (Mouse)).